Reading from the N-terminus, the 506-residue chain is Sodium-coupled neutral amino acid symporter 2 (506 aa).

A disordered region spans residues 1–23 (MKKAEMGRFNISPDEDSSSYSSN). At 1 to 76 (MKKAEMGRFN…HPGTTSFGMS (76 aa)) the chain is on the cytoplasmic side. The regulates protein turnover upon amino acid deprivation stretch occupies residues 1–96 (MKKAEMGRFN…SGILGLSYAM (96 aa)). 4 positions are modified to phosphoserine: Ser12, Ser21, Ser22, and Ser55. A helical membrane pass occupies residues 77–96 (VFNLSNAIVGSGILGLSYAM). Asn82 contributes to the Na(+) binding site. Topologically, residues 97 to 102 (ANTGIA) are extracellular. A helical transmembrane segment spans residues 103 to 123 (LFIILLTFVSIFSLYSVHLLL). Residues 124–158 (KTANEGGSLLYEQLGHKAFGMVGKLTASGSITMQN) are Cytoplasmic-facing. A helical transmembrane segment spans residues 159–177 (IGAMSSYLFIVKYELPLVI). The Extracellular portion of the chain corresponds to 178–188 (QALMNIEDTNG). A helical transmembrane segment spans residues 189 to 209 (LWYLNGDYLVLLVSLVLILPL). Residues 210-217 (SLLRNLGY) lie on the Cytoplasmic side of the membrane. The helical transmembrane segment at 218-238 (LGYTSGLSLLCMMFFLIVVIF) threads the bilayer. Residues 239–292 (KKFQISCPAEIAFLVNETVNSSLTQPATFLPDMGFNRTESDSCQPRYFIFNSQT) lie on the Extracellular side of the membrane. A disulfide bridge connects residues Cys245 and Cys281. N-linked (GlcNAc...) asparagine glycosylation is found at Asn258 and Asn274. A helical membrane pass occupies residues 293-313 (VYAVPILTFSFVCHPAILPIY). The Cytoplasmic portion of the chain corresponds to 314-329 (EELKGRSRRRMMNVSK). A helical membrane pass occupies residues 330–350 (ISFFAMFLMYLLAALFGYLTF). The Extracellular segment spans residues 351 to 371 (YGHVESELLHTYSSVMETDIL). A helical membrane pass occupies residues 372-392 (LLIVRLAVLVAVTLTVPVVIF). A Na(+)-binding site is contributed by Thr386. Over 393 to 413 (PIRSSITHLLCASKEFSWWRH) the chain is Cytoplasmic. A helical transmembrane segment spans residues 414–434 (SVITVSILVFTNLLVIFVPNI). Over 435–436 (RD) the chain is Extracellular. A helical membrane pass occupies residues 437-457 (IFGFIGASAAAMLIFILPSAF). The Cytoplasmic segment spans residues 458-472 (YIKLVKKEPMKSVQK). Residues 473-495 (IGAMFFLLSGIVVMTGSMALIVL) traverse the membrane as a helical segment. Topologically, residues 496 to 506 (DWVHNAPGGGH) are extracellular.

The protein belongs to the amino acid/polyamine transporter 2 family. Post-translationally, polyubiquitination by NEDD4L regulates the degradation and the activity of SLC38A2.

Its subcellular location is the cell membrane. The catalysed reaction is L-alanine(in) + Na(+)(in) = L-alanine(out) + Na(+)(out). The enzyme catalyses glycine(in) + Na(+)(in) = glycine(out) + Na(+)(out). It carries out the reaction L-serine(in) + Na(+)(in) = L-serine(out) + Na(+)(out). It catalyses the reaction L-proline(in) + Na(+)(in) = L-proline(out) + Na(+)(out). The catalysed reaction is L-methionine(in) + Na(+)(in) = L-methionine(out) + Na(+)(out). The enzyme catalyses L-histidine(in) + Na(+)(in) = L-histidine(out) + Na(+)(out). It carries out the reaction L-asparagine(in) + Na(+)(in) = L-asparagine(out) + Na(+)(out). It catalyses the reaction L-glutamine(in) + Na(+)(in) = L-glutamine(out) + Na(+)(out). The catalysed reaction is L-threonine(in) + Na(+)(in) = L-threonine(out) + Na(+)(out). The enzyme catalyses L-leucine(in) + Na(+)(in) = L-leucine(out) + Na(+)(out). It carries out the reaction L-phenylalanine(in) + Na(+)(in) = L-phenylalanine(out) + Na(+)(out). With respect to regulation, inhibited by N-methyl-D-glucamine. Inhibited by choline. Allosteric regulation of sodium ions binding by pH. Functionally, symporter that cotransports neutral amino acids and sodium ions from the extracellular to the intracellular side of the cell membrane. The transport is pH-sensitive, Li(+)-intolerant, electrogenic, driven by the Na(+) electrochemical gradient and cotransports of neutral amino acids and sodium ions with a stoichiometry of 1:1. May function in the transport of amino acids at the blood-brain barrier. May function in the transport of amino acids in the supply of maternal nutrients to the fetus through the placenta. Maintains a key metabolic glutamine/glutamate balance underpinning retrograde signaling by dendritic release of the neurotransmitter glutamate. Transports L-proline in differentiating osteoblasts for the efficient synthesis of proline-enriched proteins and provides proline essential for osteoblast differentiation and bone formation during bone development. In Bos taurus (Bovine), this protein is Sodium-coupled neutral amino acid symporter 2.